Here is a 414-residue protein sequence, read N- to C-terminus: Isocitrate dehydrogenase [NADP] cytoplasmic (414 aa).

Serine 2 is subject to N-acetylserine. At tyrosine 42 the chain carries Phosphotyrosine. 75–77 (TIT) contributes to the NADP(+) binding site. Threonine 77 serves as a coordination point for substrate. Lysine 81 bears the N6-acetyllysine mark. Residue arginine 82 participates in NADP(+) binding. Residues 94 to 100 (SPNGTIR) and arginine 109 each bind substrate. At lysine 126 the chain carries N6-succinyllysine. Positions 132 and 212 each coordinate substrate. An N6-acetyllysine mark is found at lysine 224, lysine 233, and lysine 243. Aspartate 252 is a Mn(2+) binding site. Lysine 260 contacts NADP(+). Mn(2+)-binding residues include aspartate 275 and aspartate 279. 310–315 (GTVTRH) lines the NADP(+) pocket. The residue at position 321 (lysine 321) is an N6-acetyllysine. Asparagine 328 contributes to the NADP(+) binding site. The residue at position 389 (serine 389) is a Phosphoserine. Residue lysine 400 is modified to N6-succinyllysine.

Belongs to the isocitrate and isopropylmalate dehydrogenases family. As to quaternary structure, homodimer. It depends on Mg(2+) as a cofactor. Mn(2+) is required as a cofactor. Post-translationally, acetylation at Lys-374 dramatically reduces catalytic activity. As to expression, highly expressed in the liver followed by kidney, lower expression in spleen, brain and lung.

The protein localises to the cytoplasm. It localises to the cytosol. It catalyses the reaction D-threo-isocitrate + NADP(+) = 2-oxoglutarate + CO2 + NADPH. Its activity is regulated as follows. Irreversibly inhibited by Cd(2+) concentrations above 50 uM. Functionally, catalyzes the NADP(+)-dependent oxidative decarboxylation of isocitrate (D-threo-isocitrate) to 2-ketoglutarate (2-oxoglutarate), which is required by other enzymes such as the phytanoyl-CoA dioxygenase. Plays a critical role in the generation of NADPH, an important cofactor in many biosynthesis pathways. May act as a corneal epithelial crystallin and may be involved in maintaining corneal epithelial transparency. The polypeptide is Isocitrate dehydrogenase [NADP] cytoplasmic (Idh1) (Mus musculus (Mouse)).